Reading from the N-terminus, the 456-residue chain is Methylenetetrahydrofolate--tRNA-(uracil-5-)-methyltransferase TrmFO (456 aa).

FAD is bound at residue 11-16; that stretch reads GGGLAG.

This sequence belongs to the MnmG family. TrmFO subfamily. It depends on FAD as a cofactor.

Its subcellular location is the cytoplasm. The enzyme catalyses uridine(54) in tRNA + (6R)-5,10-methylene-5,6,7,8-tetrahydrofolate + NADH + H(+) = 5-methyluridine(54) in tRNA + (6S)-5,6,7,8-tetrahydrofolate + NAD(+). It carries out the reaction uridine(54) in tRNA + (6R)-5,10-methylene-5,6,7,8-tetrahydrofolate + NADPH + H(+) = 5-methyluridine(54) in tRNA + (6S)-5,6,7,8-tetrahydrofolate + NADP(+). Functionally, catalyzes the folate-dependent formation of 5-methyl-uridine at position 54 (M-5-U54) in all tRNAs. The chain is Methylenetetrahydrofolate--tRNA-(uracil-5-)-methyltransferase TrmFO from Synechocystis sp. (strain ATCC 27184 / PCC 6803 / Kazusa).